Consider the following 340-residue polypeptide: GTP 3',8-cyclase (340 aa).

In terms of domain architecture, Radical SAM core spans 20–246 (RFERQYVYLR…PKALSDGPAK (227 aa)). Arginine 29 serves as a coordination point for GTP. [4Fe-4S] cluster is bound by residues cysteine 36 and cysteine 40. Tyrosine 42 is a binding site for S-adenosyl-L-methionine. Cysteine 43 contacts [4Fe-4S] cluster. Arginine 79 contacts GTP. Glycine 83 contacts S-adenosyl-L-methionine. Threonine 110 provides a ligand contact to GTP. Serine 134 is an S-adenosyl-L-methionine binding site. Lysine 171 lines the GTP pocket. Methionine 205 is a binding site for S-adenosyl-L-methionine. [4Fe-4S] cluster contacts are provided by cysteine 268 and cysteine 271. 273-275 (RLR) contributes to the GTP binding site. Cysteine 285 contacts [4Fe-4S] cluster.

Belongs to the radical SAM superfamily. MoaA family. Monomer and homodimer. It depends on [4Fe-4S] cluster as a cofactor.

The enzyme catalyses GTP + AH2 + S-adenosyl-L-methionine = (8S)-3',8-cyclo-7,8-dihydroguanosine 5'-triphosphate + 5'-deoxyadenosine + L-methionine + A + H(+). The protein operates within cofactor biosynthesis; molybdopterin biosynthesis. Its function is as follows. Catalyzes the cyclization of GTP to (8S)-3',8-cyclo-7,8-dihydroguanosine 5'-triphosphate. The protein is GTP 3',8-cyclase of Actinobacillus pleuropneumoniae serotype 3 (strain JL03).